Consider the following 78-residue polypeptide: Large ribosomal subunit protein bL28 (78 aa).

The interval 1–22 is disordered; that stretch reads MSKVCQVTGKRPTTGNNVSHAN. The segment covering 11–22 has biased composition (polar residues); that stretch reads RPTTGNNVSHAN.

This sequence belongs to the bacterial ribosomal protein bL28 family.

The chain is Large ribosomal subunit protein bL28 from Alkalilimnicola ehrlichii (strain ATCC BAA-1101 / DSM 17681 / MLHE-1).